The following is a 104-amino-acid chain: Iron-sulfur cluster assembly protein CyaY (104 aa).

Belongs to the frataxin family.

Its function is as follows. Involved in iron-sulfur (Fe-S) cluster assembly. May act as a regulator of Fe-S biogenesis. The polypeptide is Iron-sulfur cluster assembly protein CyaY (Aeromonas salmonicida (strain A449)).